Reading from the N-terminus, the 179-residue chain is UPF0303 protein YBR137W (179 aa).

It belongs to the UPF0303 family.

It is found in the cytoplasm. This chain is UPF0303 protein YBR137W, found in Saccharomyces cerevisiae (strain ATCC 204508 / S288c) (Baker's yeast).